A 550-amino-acid polypeptide reads, in one-letter code: Hydroxylamine reductase (550 aa).

[2Fe-2S] cluster contacts are provided by cysteine 3, cysteine 6, cysteine 18, and cysteine 25. Hybrid [4Fe-2O-2S] cluster contacts are provided by histidine 249, glutamate 273, cysteine 317, cysteine 405, cysteine 433, cysteine 458, glutamate 492, and lysine 494. A Cysteine persulfide modification is found at cysteine 405.

It belongs to the HCP family. [2Fe-2S] cluster is required as a cofactor. Requires hybrid [4Fe-2O-2S] cluster as cofactor.

The protein localises to the cytoplasm. It catalyses the reaction A + NH4(+) + H2O = hydroxylamine + AH2 + H(+). Its function is as follows. Catalyzes the reduction of hydroxylamine to form NH(3) and H(2)O. The sequence is that of Hydroxylamine reductase from Salmonella agona (strain SL483).